The following is a 669-amino-acid chain: DNA mismatch repair protein MutL (669 aa).

Disordered stretches follow at residues 354-402 (NRPA…ENPY) and 448-479 (TVSH…PLES). Over residues 448 to 468 (TVSHDSPPNRTAPDATTSSSK) the composition is skewed to polar residues.

It belongs to the DNA mismatch repair MutL/HexB family.

Its function is as follows. This protein is involved in the repair of mismatches in DNA. It is required for dam-dependent methyl-directed DNA mismatch repair. May act as a 'molecular matchmaker', a protein that promotes the formation of a stable complex between two or more DNA-binding proteins in an ATP-dependent manner without itself being part of a final effector complex. In Pectobacterium carotovorum subsp. carotovorum (strain PC1), this protein is DNA mismatch repair protein MutL.